We begin with the raw amino-acid sequence, 301 residues long: Glycine--tRNA ligase alpha subunit (301 aa).

It belongs to the class-II aminoacyl-tRNA synthetase family. Tetramer of two alpha and two beta subunits.

It localises to the cytoplasm. It carries out the reaction tRNA(Gly) + glycine + ATP = glycyl-tRNA(Gly) + AMP + diphosphate. The protein is Glycine--tRNA ligase alpha subunit of Bordetella avium (strain 197N).